We begin with the raw amino-acid sequence, 626 residues long: UvrABC system protein C (626 aa).

Residues 26–105 form the GIY-YIG domain; the sequence is PEPGVYFMRD…IKQHQPHFNV (80 aa). The UVR domain maps to 215-250; it reads SELINTLSLQMEQAAEDLNFEQAARLRDQIKGLQGL.

This sequence belongs to the UvrC family. In terms of assembly, interacts with UvrB in an incision complex.

The protein localises to the cytoplasm. Functionally, the UvrABC repair system catalyzes the recognition and processing of DNA lesions. UvrC both incises the 5' and 3' sides of the lesion. The N-terminal half is responsible for the 3' incision and the C-terminal half is responsible for the 5' incision. This chain is UvrABC system protein C, found in Acaryochloris marina (strain MBIC 11017).